Here is a 332-residue protein sequence, read N- to C-terminus: L-lactate dehydrogenase A chain (332 aa).

Residues 29 to 57 (GAVG…VEDK) and Arg-99 each bind NAD(+). Arg-106, Asn-138, and Arg-169 together coordinate substrate. Asn-138 is an NAD(+) binding site. The active-site Proton acceptor is His-193. Thr-248 lines the substrate pocket.

Belongs to the LDH/MDH superfamily. LDH family. In terms of assembly, homotetramer.

It is found in the cytoplasm. It carries out the reaction (S)-lactate + NAD(+) = pyruvate + NADH + H(+). It participates in fermentation; pyruvate fermentation to lactate; (S)-lactate from pyruvate: step 1/1. Its function is as follows. Interconverts simultaneously and stereospecifically pyruvate and lactate with concomitant interconversion of NADH and NAD(+). This chain is L-lactate dehydrogenase A chain (LDHA), found in Alligator mississippiensis (American alligator).